Consider the following 417-residue polypeptide: UDP-N-acetylglucosamine 1-carboxyvinyltransferase (417 aa).

Phosphoenolpyruvate is bound at residue 22–23; that stretch reads KN. Arg-93 contacts UDP-N-acetyl-alpha-D-glucosamine. Residue Cys-117 is the Proton donor of the active site. Cys-117 carries the 2-(S-cysteinyl)pyruvic acid O-phosphothioketal modification. Residues 122–126, Asp-305, and Ile-327 each bind UDP-N-acetyl-alpha-D-glucosamine; that span reads RPVDQ.

Belongs to the EPSP synthase family. MurA subfamily.

The protein localises to the cytoplasm. The catalysed reaction is phosphoenolpyruvate + UDP-N-acetyl-alpha-D-glucosamine = UDP-N-acetyl-3-O-(1-carboxyvinyl)-alpha-D-glucosamine + phosphate. It functions in the pathway cell wall biogenesis; peptidoglycan biosynthesis. In terms of biological role, cell wall formation. Adds enolpyruvyl to UDP-N-acetylglucosamine. The polypeptide is UDP-N-acetylglucosamine 1-carboxyvinyltransferase (Chromobacterium violaceum (strain ATCC 12472 / DSM 30191 / JCM 1249 / CCUG 213 / NBRC 12614 / NCIMB 9131 / NCTC 9757 / MK)).